Consider the following 66-residue polypeptide: UPF0337 protein RPA4217 (66 aa).

This sequence belongs to the UPF0337 (CsbD) family.

This is UPF0337 protein RPA4217 from Rhodopseudomonas palustris (strain ATCC BAA-98 / CGA009).